The chain runs to 176 residues: Telomerase RNA component interacting RNase (176 aa).

Basic and acidic residues predominate over residues Met-1–Gly-12. A disordered region spans residues Met-1 to Gly-121. Residues Ser-45 to Val-56 are compositionally biased toward low complexity. Basic and acidic residues predominate over residues Leu-68–Glu-83. A compositionally biased stretch (low complexity) spans Arg-90–Gly-101. Lys-146 is modified (N6-acetyllysine).

As to quaternary structure, part of the telomerase RNA 3' end complex which contains about 488 proteins.

With respect to regulation, zn(2+) inhibits the RNase activity while Mg(2+), Ca(2+), Mn(2+), K(+), Na(+), EDTA and EGTA show little effect on the exoribonuclease activity. In terms of biological role, exoribonuclease that is part of the telomerase RNA 3' end processing complex and which has the ability to cleave all four unpaired RNA nucleotides from the 5' end or 3' end with higher efficiency for purine bases. The protein is Telomerase RNA component interacting RNase of Homo sapiens (Human).